A 308-amino-acid chain; its full sequence is D-alanine--D-alanine ligase (308 aa).

An ATP-grasp domain is found at 102–302 (KTVAKSAGIP…FGALLSWMVE (201 aa)). 128 to 183 (PMEPPYVVKPVAEGSSFGVVIVREGQSHPPQVLGSAEWGYGERVMVERYIPGRELT) serves as a coordination point for ATP. Mg(2+)-binding residues include Asp252, Glu269, and Asn271.

The protein belongs to the D-alanine--D-alanine ligase family. Mg(2+) is required as a cofactor. It depends on Mn(2+) as a cofactor.

It is found in the cytoplasm. The catalysed reaction is 2 D-alanine + ATP = D-alanyl-D-alanine + ADP + phosphate + H(+). It functions in the pathway cell wall biogenesis; peptidoglycan biosynthesis. Functionally, cell wall formation. In Chelativorans sp. (strain BNC1), this protein is D-alanine--D-alanine ligase.